A 250-amino-acid polypeptide reads, in one-letter code: Protein KPLCE (250 aa).

Skin-specific.

This Homo sapiens (Human) protein is Protein KPLCE.